A 240-amino-acid chain; its full sequence is Probable transcriptional regulatory protein HPAG1_0159 (240 aa).

It belongs to the TACO1 family.

Its subcellular location is the cytoplasm. This Helicobacter pylori (strain HPAG1) protein is Probable transcriptional regulatory protein HPAG1_0159.